A 115-amino-acid polypeptide reads, in one-letter code: T cell receptor delta variable 1 (115 aa).

The N-terminal stretch at 1 to 21 is a signal peptide; sequence MLFSSLLCVFVAFSYSGSSVA. In terms of domain architecture, Ig-like spans 22–115; that stretch reads QKVTQAQSSV…SAKYFCALGE (94 aa). An intrachain disulfide couples C43 to C111.

As to quaternary structure, gamma-delta TR is a heterodimer composed of a gamma and delta chain; disulfide-linked. The gamma-delta TR is associated with the transmembrane signaling CD3 coreceptor proteins following the stoichiometry: a single gamma-delta TR heterodimer associates with one CD3D-CD3E heterodimer, one CD3G-CD3E heterodimer and one CD247 homodimer forming a stable octameric structure. Upon activation, gamma-delta TR complex associates with FCER1G to initiate intracellular signaling.

It localises to the cell membrane. Its function is as follows. V region of the variable domain of T cell receptor (TR) delta chain that participates in the antigen recognition. Gamma-delta TRs recognize a variety of self and foreign non-peptide antigens frequently expressed at the epithelial boundaries between the host and external environment, including endogenous lipids presented by MH-like protein CD1D and phosphoantigens presented by butyrophilin-like molecule BTN3A1. Upon antigen recognition induces rapid, innate-like immune responses involved in pathogen clearance and tissue repair. Binding of gamma-delta TR complex to antigen triggers phosphorylation of immunoreceptor tyrosine-based activation motifs (ITAMs) in the CD3 chains by the LCK and FYN kinases, allowing the recruitment, phosphorylation, and activation of ZAP70 that facilitates phosphorylation of the scaffolding proteins LCP2 and LAT. This lead to the formation of a supramolecular signalosome that recruits the phospholipase PLCG1, resulting in calcium mobilization and ERK activation, ultimately leading to T cell expansion and differentiation into effector cells. Gamma-delta TRs are produced through somatic rearrangement of a limited repertoire of variable (V), diversity (D), and joining (J) genes. The potential diversity of gamma-delta TRs is conferred by the unique ability to rearrange (D) genes in tandem and to utilize all three reading frames. The combinatorial diversity is considerably increased by the sequence exonuclease trimming and random nucleotide (N) region additions which occur during the V-(D)-J rearrangements. The chain is T cell receptor delta variable 1 from Homo sapiens (Human).